The sequence spans 132 residues: Large ribosomal subunit protein bL17 (132 aa).

This sequence belongs to the bacterial ribosomal protein bL17 family. As to quaternary structure, part of the 50S ribosomal subunit. Contacts protein L32.

The protein is Large ribosomal subunit protein bL17 of Cellvibrio japonicus (strain Ueda107) (Pseudomonas fluorescens subsp. cellulosa).